A 256-amino-acid chain; its full sequence is MKTLVLLSICALLSVCWSMGAVEPEVVVDTVADTTADAAPADPAAAAAPSSSSSESSESSESSESSESSESSESSESSESNSSSASDSNSSSDSSASDSNSSSDSSSSSSSSSSSSSSSSSSSESTESSESSESSSSSSSSSSSSSSSSSSSSSESSSSESNSADSSASDSPSSSSSSSSSSSSESASDEAAKVVVKRDLASVLLRRRRAAPGGDLTPLQLESLREVCELNIACDEMAETAGIVAAYVAYYGPVPF.

Positions 1–18 are cleaved as a signal peptide; that stretch reads MKTLVLLSICALLSVCWS. A propeptide spanning residues 19–209 is cleaved from the precursor; that stretch reads MGAVEPEVVV…LASVLLRRRR (191 aa). Residues 38-186 show a composition bias toward low complexity; the sequence is AAPADPAAAA…SSSSSSSSES (149 aa). The interval 38-193 is disordered; it reads AAPADPAAAA…SESASDEAAK (156 aa). The Gla domain occupies 218–252; it reads PLQLESLREVCELNIACDEMAETAGIVAAYVAYYG. 4 residues coordinate Ca(2+): glutamate 222, glutamate 226, glutamate 229, and aspartate 235. Residues glutamate 222, glutamate 226, and glutamate 229 each carry the 4-carboxyglutamate modification. A disulfide bond links cysteine 228 and cysteine 234. Glutamate 236 is modified (4-carboxyglutamate).

It belongs to the osteocalcin/matrix Gla protein family. Gamma-carboxyglutamate residues are formed by vitamin K dependent carboxylation by GGCX. These residues are essential for the binding of calcium.

Its subcellular location is the secreted. In terms of biological role, the carboxylated form is one of the main organic components of the bone matrix, which constitutes 1-2% of the total bone protein. The carboxylated form binds strongly to apatite and calcium. The protein is Osteocalcin 2 of Diplodus sargus (White seabream).